A 410-amino-acid chain; its full sequence is Heat stress transcription factor A-9 (410 aa).

The tract at residues methionine 1–lysine 44 is disordered. A compositionally biased stretch (gly residues) spans valine 20 to glycine 33. Residues glycine 171–arginine 246 adopt a coiled-coil conformation. Residues leucine 179–valine 229 form a hydrophobic repeat HR-A/B region. A Nuclear localization signal motif is present at residues serine 256–arginine 260. The Nuclear export signal motif lies at alanine 279–glutamate 290.

It belongs to the HSF family. Class A subfamily. Homotrimer. Post-translationally, exhibits temperature-dependent phosphorylation.

It localises to the cytoplasm. Its subcellular location is the nucleus. Functionally, transcriptional regulator that specifically binds DNA of heat shock promoter elements (HSE). In Oryza sativa subsp. japonica (Rice), this protein is Heat stress transcription factor A-9 (HSFA9).